The sequence spans 306 residues: Ornithine carbamoyltransferase (306 aa).

Carbamoyl phosphate contacts are provided by residues 46 to 49 (STRT), glutamine 73, arginine 97, and 124 to 127 (HPTQ). Residues asparagine 156, aspartate 220, and 224 to 225 (SM) contribute to the L-ornithine site. Residues 260 to 261 (CL) and arginine 288 each bind carbamoyl phosphate.

Belongs to the aspartate/ornithine carbamoyltransferase superfamily. OTCase family.

Its subcellular location is the cytoplasm. The enzyme catalyses carbamoyl phosphate + L-ornithine = L-citrulline + phosphate + H(+). It participates in amino-acid biosynthesis; L-arginine biosynthesis; L-arginine from L-ornithine and carbamoyl phosphate: step 1/3. Functionally, reversibly catalyzes the transfer of the carbamoyl group from carbamoyl phosphate (CP) to the N(epsilon) atom of ornithine (ORN) to produce L-citrulline. The polypeptide is Ornithine carbamoyltransferase (Campylobacter jejuni subsp. jejuni serotype O:23/36 (strain 81-176)).